The sequence spans 508 residues: UBX domain-containing protein 4 (508 aa).

Residues 1–200 are interaction with UBQLN1; the sequence is MLWFQGAIPA…PAEDLNIRVE (200 aa). The Cytoplasmic portion of the chain corresponds to 1–413; the sequence is MLWFQGAIPA…VHSSSGDIWT (413 aa). Polar residues-rich tracts occupy residues 117–151 and 160–187; these read SETSVANGSQSESSVSTPSASFEPNNTCENSQSRN and TSDTKSDTATGGESAGHATSSQEPSGCS. The interval 117-196 is disordered; sequence SETSVANGSQ…SDQRPAEDLN (80 aa). The region spanning 315 to 393 is the UBX domain; it reads ERSTVARIQF…ELAPSASVVL (79 aa). Residues 414–434 lie within the membrane without spanning it; that stretch reads LLGTVLYPFLAIWRLISNFLF. Residues 435-508 are Cytoplasmic-facing; that stretch reads SNPPPTQTSV…TWNGNSTQQM (74 aa). The disordered stretch occupies residues 440 to 508; it reads TQTSVRVTSS…TWNGNSTQQM (69 aa). A compositionally biased stretch (polar residues) spans 441–458; sequence QTSVRVTSSEPPNPASSS. Residues 459–491 are compositionally biased toward basic and acidic residues; it reads KSEKREPVRKRVLEKRGDDFKKEGKIYRLRTQD. The residue at position 489 (T489) is a Phosphothreonine. The span at 498–508 shows a compositional bias: polar residues; the sequence is NTWNGNSTQQM.

In terms of assembly, directly interacts with VCP. Interacts with UBQLN1. Forms a complex with VCP and UBQLN1. In terms of tissue distribution, expressed in many tissues, including heart, brain, placenta, lung, liver, skeletal muscle, kidney and pancreas. Accumulates in Alzheimer disease-afflicted brains (at protein level).

It is found in the endoplasmic reticulum membrane. It localises to the nucleus envelope. Involved in endoplasmic reticulum-associated protein degradation (ERAD). Acts as a platform to recruit both UBQLN1 and VCP to the ER during ERAD. The polypeptide is UBX domain-containing protein 4 (UBXN4) (Homo sapiens (Human)).